A 155-amino-acid chain; its full sequence is Regulatory protein RecX (155 aa).

The protein belongs to the RecX family.

Its subcellular location is the cytoplasm. Functionally, modulates RecA activity. This Pseudomonas savastanoi pv. phaseolicola (strain 1448A / Race 6) (Pseudomonas syringae pv. phaseolicola (strain 1448A / Race 6)) protein is Regulatory protein RecX.